Reading from the N-terminus, the 298-residue chain is Ribosomal protein L11 methyltransferase (298 aa).

The S-adenosyl-L-methionine site is built by threonine 139, glycine 163, aspartate 185, and asparagine 232.

Belongs to the methyltransferase superfamily. PrmA family.

It is found in the cytoplasm. It carries out the reaction L-lysyl-[protein] + 3 S-adenosyl-L-methionine = N(6),N(6),N(6)-trimethyl-L-lysyl-[protein] + 3 S-adenosyl-L-homocysteine + 3 H(+). Methylates ribosomal protein L11. This chain is Ribosomal protein L11 methyltransferase, found in Gloeothece citriformis (strain PCC 7424) (Cyanothece sp. (strain PCC 7424)).